Reading from the N-terminus, the 364-residue chain is NADH-quinone oxidoreductase subunit H (364 aa).

Transmembrane regions (helical) follow at residues 21–41 (AGQI…LLLA), 88–108 (VFLL…AVIP), 120–140 (VGIL…IMGG), 159–179 (MVSY…LAGS), 208–228 (LPLL…GLAE), 267–287 (IVLI…APFP), 301–321 (FYYF…VSMA), and 340–360 (VFLP…VFGP).

This sequence belongs to the complex I subunit 1 family. In terms of assembly, NDH-1 is composed of 14 different subunits. Subunits NuoA, H, J, K, L, M, N constitute the membrane sector of the complex.

The protein resides in the cell inner membrane. It carries out the reaction a quinone + NADH + 5 H(+)(in) = a quinol + NAD(+) + 4 H(+)(out). Functionally, NDH-1 shuttles electrons from NADH, via FMN and iron-sulfur (Fe-S) centers, to quinones in the respiratory chain. The immediate electron acceptor for the enzyme in this species is believed to be ubiquinone. Couples the redox reaction to proton translocation (for every two electrons transferred, four hydrogen ions are translocated across the cytoplasmic membrane), and thus conserves the redox energy in a proton gradient. This subunit may bind ubiquinone. This Phenylobacterium zucineum (strain HLK1) protein is NADH-quinone oxidoreductase subunit H.